A 303-amino-acid polypeptide reads, in one-letter code: Coenzyme PQQ synthesis protein B (303 aa).

This sequence belongs to the PqqB family.

Its pathway is cofactor biosynthesis; pyrroloquinoline quinone biosynthesis. May be involved in the transport of PQQ or its precursor to the periplasm. The protein is Coenzyme PQQ synthesis protein B of Pseudomonas putida (strain GB-1).